A 605-amino-acid chain; its full sequence is Protein phosphatase 1D (605 aa).

The interval 1-101 (MAGLYSLGVS…CRRRSSVAFF (101 aa)) is interaction with CHEK1. Residues 8-375 (GVSVFSDQGG…DNTSAIVICI (368 aa)) form the PPM-type phosphatase domain. Residues 28–90 (VVEPEPTAEE…DAGASPAPSR (63 aa)) form a disordered region. Phosphoserine is present on residues serine 40 and serine 85. Mn(2+) is bound by residues aspartate 105, glycine 106, aspartate 314, and aspartate 366. Residues 516-591 (STPGQMKAQE…RRLRGQKKIG (76 aa)) form a disordered region. Composition is skewed to polar residues over residues 530–544 (PPTN…SNSG) and 555–577 (LSRS…NSVK). The span at 579 to 588 (TMRRRLRGQK) shows a compositional bias: basic residues.

This sequence belongs to the PP2C family. In terms of assembly, interacts with CHEK1 and CHEK2; dephosphorylates them. Interacts with MAPK14. Requires Mg(2+) as cofactor. Mn(2+) is required as a cofactor. Expressed in fetal and adult brain. Also detected in fetal liver and skeletal muscle, but not in their adult counterparts.

Its subcellular location is the nucleus. It localises to the cytoplasm. It is found in the cytosol. The enzyme catalyses O-phospho-L-seryl-[protein] + H2O = L-seryl-[protein] + phosphate. It carries out the reaction O-phospho-L-threonyl-[protein] + H2O = L-threonyl-[protein] + phosphate. In terms of biological role, involved in the negative regulation of p53 expression. Required for the relief of p53-dependent checkpoint mediated cell cycle arrest. Binds to and dephosphorylates 'Ser-15' of TP53 and 'Ser-345' of CHEK1 which contributes to the functional inactivation of these proteins. Mediates MAPK14 dephosphorylation and inactivation. Is also an important regulator of global heterochromatin silencing and critical in maintaining genome integrity. This chain is Protein phosphatase 1D (PPM1D), found in Homo sapiens (Human).